The primary structure comprises 520 residues: GMP synthase [glutamine-hydrolyzing] (520 aa).

In terms of domain architecture, Glutamine amidotransferase type-1 spans Lys13 to Asp205. Cys90 serves as the catalytic Nucleophile. Active-site residues include His179 and Glu181. Residues Trp206–Arg395 enclose the GMPS ATP-PPase domain. Residue Ser233–Ser239 participates in ATP binding.

As to quaternary structure, homodimer.

It catalyses the reaction XMP + L-glutamine + ATP + H2O = GMP + L-glutamate + AMP + diphosphate + 2 H(+). It participates in purine metabolism; GMP biosynthesis; GMP from XMP (L-Gln route): step 1/1. Its function is as follows. Catalyzes the synthesis of GMP from XMP. The chain is GMP synthase [glutamine-hydrolyzing] from Streptococcus pneumoniae (strain P1031).